Consider the following 336-residue polypeptide: Glyceraldehyde-3-phosphate dehydrogenase (336 aa).

Residues 12 to 13 (RI), aspartate 34, arginine 78, and serine 120 each bind NAD(+). D-glyceraldehyde 3-phosphate-binding positions include 151 to 153 (SCT) and threonine 182. Cysteine 152 functions as the Nucleophile in the catalytic mechanism. An NAD(+)-binding site is contributed by asparagine 183. D-glyceraldehyde 3-phosphate is bound by residues 211-212 (NG) and arginine 234. An NAD(+)-binding site is contributed by asparagine 316.

It belongs to the glyceraldehyde-3-phosphate dehydrogenase family. In terms of assembly, homotetramer.

It localises to the cytoplasm. The enzyme catalyses D-glyceraldehyde 3-phosphate + phosphate + NAD(+) = (2R)-3-phospho-glyceroyl phosphate + NADH + H(+). It participates in carbohydrate degradation; glycolysis; pyruvate from D-glyceraldehyde 3-phosphate: step 1/5. Functionally, catalyzes the oxidative phosphorylation of glyceraldehyde 3-phosphate (G3P) to 1,3-bisphosphoglycerate (BPG) using the cofactor NAD. The first reaction step involves the formation of a hemiacetal intermediate between G3P and a cysteine residue, and this hemiacetal intermediate is then oxidized to a thioester, with concomitant reduction of NAD to NADH. The reduced NADH is then exchanged with the second NAD, and the thioester is attacked by a nucleophilic inorganic phosphate to produce BPG. The sequence is that of Glyceraldehyde-3-phosphate dehydrogenase (gap) from Heyndrickxia coagulans (Weizmannia coagulans).